The following is a 334-amino-acid chain: L-lactate dehydrogenase B chain (334 aa).

Alanine 2 carries the post-translational modification N-acetylalanine. Residue lysine 7 is modified to N6-acetyllysine. 31-53 (QVGMACAISILGKSLADELALVD) contributes to the NAD(+) binding site. Serine 44 carries the phosphoserine modification. The residue at position 58 (lysine 58) is an N6-acetyllysine. Arginine 100 serves as a coordination point for NAD(+). Arginine 107 provides a ligand contact to substrate. Lysine 119 carries the post-translational modification N6-acetyllysine. Residue asparagine 139 participates in NAD(+) binding. 2 residues coordinate substrate: asparagine 139 and arginine 170. Catalysis depends on histidine 194, which acts as the Proton acceptor. A Phosphotyrosine modification is found at tyrosine 240. Threonine 249 is a substrate binding site. Lysine 329 is modified (N6-acetyllysine).

The protein belongs to the LDH/MDH superfamily. LDH family. As to quaternary structure, homotetramer. Interacts with PTEN upstream reading frame protein MP31; the interaction leads to inhibition of mitochondrial lactate dehydrogenase activity, preventing conversion of lactate to pyruvate in mitochondria. In terms of tissue distribution, predominantly expressed in aerobic tissues such as cardiac muscle.

The protein resides in the cytoplasm. Its subcellular location is the mitochondrion inner membrane. The catalysed reaction is (S)-lactate + NAD(+) = pyruvate + NADH + H(+). Its pathway is fermentation; pyruvate fermentation to lactate; (S)-lactate from pyruvate: step 1/1. Functionally, interconverts simultaneously and stereospecifically pyruvate and lactate with concomitant interconversion of NADH and NAD(+). This is L-lactate dehydrogenase B chain (LDHB) from Homo sapiens (Human).